The primary structure comprises 471 residues: Protein naked cuticle homolog 1 (471 aa).

2 disordered regions span residues 1-23 (MGKL…GDSF) and 41-82 (QRCP…DEDD). The N-myristoyl glycine moiety is linked to residue glycine 2. Positions 62–75 (GTRELVGDTSREAL) are enriched in basic and acidic residues. The interval 125–190 (QCDVSVEEDS…LRVKLTVAPD (66 aa)) is interaction with DVL1, DVL2 and DVL3. In terms of domain architecture, EF-hand spans 131 to 166 (EEDSRQEWTFTLYDFDNNGKVTREDITSLLHTIYEV). Ca(2+)-binding residues include aspartate 144, aspartate 146, asparagine 148, lysine 150, and aspartate 155. Disordered stretches follow at residues 273 to 314 (GPGS…QGVD), 337 to 382 (GTQD…SPSA), and 448 to 471 (QAVQ…FYQP). Residues 453–471 (HEHHHHHEHHHHYHHFYQP) are compositionally biased toward basic residues.

Belongs to the NKD family. As to quaternary structure, interacts with DVL1, DVL2, DVL3 and PPP2R3A. Highly expressed in lung. Also expressed in brain, heart, kidney, liver, skin, stomach and testis. Within the testis expression is found in the seminiferous epithelium and round and elongating spermatids.

It localises to the cell membrane. The protein resides in the cytoplasm. In terms of biological role, cell autonomous antagonist of the canonical Wnt signaling pathway. May activate a second Wnt signaling pathway that controls planar cell polarity. Required for spermatogenesis. This chain is Protein naked cuticle homolog 1 (Nkd1), found in Mus musculus (Mouse).